We begin with the raw amino-acid sequence, 257 residues long: Deoxyribose-phosphate aldolase (257 aa).

The active-site Proton donor/acceptor is D102. K166 (schiff-base intermediate with acetaldehyde) is an active-site residue. K198 (proton donor/acceptor) is an active-site residue.

Belongs to the DeoC/FbaB aldolase family. DeoC type 2 subfamily.

The protein localises to the cytoplasm. It catalyses the reaction 2-deoxy-D-ribose 5-phosphate = D-glyceraldehyde 3-phosphate + acetaldehyde. It participates in carbohydrate degradation; 2-deoxy-D-ribose 1-phosphate degradation; D-glyceraldehyde 3-phosphate and acetaldehyde from 2-deoxy-alpha-D-ribose 1-phosphate: step 2/2. In terms of biological role, catalyzes a reversible aldol reaction between acetaldehyde and D-glyceraldehyde 3-phosphate to generate 2-deoxy-D-ribose 5-phosphate. This Shewanella frigidimarina (strain NCIMB 400) protein is Deoxyribose-phosphate aldolase.